A 401-amino-acid chain; its full sequence is Probable inactive purple acid phosphatase 14 (401 aa).

The first 30 residues, 1-30, serve as a signal peptide directing secretion; it reads MEETRRRFVISSVLSVSLIYLCLSTCHVSA. A glycan (N-linked (GlcNAc...) asparagine) is linked at N79. Position 197 (N197) interacts with substrate. N197 provides a ligand contact to Zn(2+). N246 carries N-linked (GlcNAc...) asparagine glycosylation. Residue H256 coordinates Zn(2+). An N-linked (GlcNAc...) asparagine glycan is attached at N266. H305 is a binding site for Zn(2+). 305–307 is a binding site for substrate; it reads HDH. H307 contacts Fe cation. N-linked (GlcNAc...) asparagine glycans are attached at residues N371 and N384.

This sequence belongs to the metallophosphoesterase superfamily. Purple acid phosphatase family. As to quaternary structure, homodimer. Fe cation is required as a cofactor. Zn(2+) serves as cofactor. Specifically expressed in flowers.

Its subcellular location is the secreted. The sequence is that of Probable inactive purple acid phosphatase 14 (PAP14) from Arabidopsis thaliana (Mouse-ear cress).